The following is a 441-amino-acid chain: Vacuolar cation/proton exchanger 2 (441 aa).

The Cytoplasmic segment spans residues 1-69 (MSCCKVPVLI…PKNSVLNSIK (69 aa)). The helical transmembrane segment at 70 to 90 (IVIFCNKLNLLLPFGPLAILV) threads the bilayer. The Extracellular portion of the chain corresponds to 91–97 (HYMIDSK). Residues 98–118 (GWVFLLTLVGITPLAERLGYA) form a helical membrane-spanning segment. Residues 119–129 (TEQLACYTGPT) are Cytoplasmic-facing. Residues 130-150 (VGGLLNATFGNVTELIISIFA) form a helical membrane-spanning segment. Residues 139–174 (GNVTELIISIFALKNGMIRVVQLTLLGSILSNMLLV) form a cation selection region. Topologically, residues 151 to 166 (LKNGMIRVVQLTLLGS) are extracellular. Residues 167-187 (ILSNMLLVLGCAFFCGGLVFY) traverse the membrane as a helical segment. Residues 188–196 (QKDQVFDKG) are Cytoplasmic-facing. Residues 197–217 (IATVNSGLLLMAVMGILFPAV) traverse the membrane as a helical segment. Residues 218 to 231 (LHYTHSEVHAGSSE) lie on the Extracellular side of the membrane. A helical transmembrane segment spans residues 232–252 (LALSRFSSCIMLIAYAAYLFF). Topologically, residues 253–286 (QLKSQSNSYSPLDEESNQNEETSAEDEDPEISKW) are cytoplasmic. The helical transmembrane segment at 287-307 (EAIIWLSILTAWVSLLSGYLV) threads the bilayer. The Extracellular portion of the chain corresponds to 308-311 (DAIE). A helical membrane pass occupies residues 312–332 (GASVSWNIPIAFISTILLPIV). Over 333-354 (GNAAEHAGAIMFAMKDKLDLSL) the chain is Cytoplasmic. Residues 333–368 (GNAAEHAGAIMFAMKDKLDLSLGVAIGSSIQISMFA) are cation selection. The chain crosses the membrane as a helical span at residues 355-375 (GVAIGSSIQISMFAVPFCVVI). The Extracellular portion of the chain corresponds to 376-384 (GWMMGQQMD). A helical membrane pass occupies residues 385–405 (LNFQLFETAMLFITVIVVAFF). Over 406–412 (LQEGSSN) the chain is Cytoplasmic. Residues 413–433 (YFKGLMLILCYLIVAASFFVH) traverse the membrane as a helical segment. Residues 434-441 (EDPHQDGI) lie on the Extracellular side of the membrane.

It belongs to the Ca(2+):cation antiporter (CaCA) (TC 2.A.19) family. Cation/proton exchanger (CAX) subfamily.

The protein resides in the vacuole membrane. Its activity is regulated as follows. Inhibited by excess of Ca(2+) and Cd(2+), Mn(2+), and Zn(2+). In terms of biological role, vacuolar cation/proton exchanger (CAX). Translocates Ca(2+) and other metal ions into vacuoles using the proton gradient formed by H(+)-ATPase and H(+)-pyrophosphatase. This chain is Vacuolar cation/proton exchanger 2 (CAX2), found in Arabidopsis thaliana (Mouse-ear cress).